A 142-amino-acid polypeptide reads, in one-letter code: Large ribosomal subunit protein uL13 (142 aa).

It belongs to the universal ribosomal protein uL13 family. In terms of assembly, part of the 50S ribosomal subunit.

This protein is one of the early assembly proteins of the 50S ribosomal subunit, although it is not seen to bind rRNA by itself. It is important during the early stages of 50S assembly. This is Large ribosomal subunit protein uL13 from Cronobacter sakazakii (strain ATCC BAA-894) (Enterobacter sakazakii).